A 388-amino-acid polypeptide reads, in one-letter code: Protein-glutamate methylesterase/protein-glutamine glutaminase (388 aa).

A Response regulatory domain is found at 20-138 (RVMVVDDSVV…ESAGAEVFRH (119 aa)). Residue Asp71 is modified to 4-aspartylphosphate. The CheB-type methylesterase domain occupies 193 to 386 (PTAPRVLLIG…PKLVRLFSGD (194 aa)). Residues Ser204, His232, and Asp328 contribute to the active site.

It belongs to the CheB family. Phosphorylated by CheA. Phosphorylation of the N-terminal regulatory domain activates the methylesterase activity.

Its subcellular location is the cytoplasm. The enzyme catalyses [protein]-L-glutamate 5-O-methyl ester + H2O = L-glutamyl-[protein] + methanol + H(+). The catalysed reaction is L-glutaminyl-[protein] + H2O = L-glutamyl-[protein] + NH4(+). In terms of biological role, involved in chemotaxis. Part of a chemotaxis signal transduction system that modulates chemotaxis in response to various stimuli. Catalyzes the demethylation of specific methylglutamate residues introduced into the chemoreceptors (methyl-accepting chemotaxis proteins or MCP) by CheR. Also mediates the irreversible deamidation of specific glutamine residues to glutamic acid. The polypeptide is Protein-glutamate methylesterase/protein-glutamine glutaminase (Rhodopseudomonas palustris (strain HaA2)).